The sequence spans 311 residues: Porphobilinogen deaminase (311 aa).

The residue at position 241 (C241) is an S-(dipyrrolylmethanemethyl)cysteine.

Belongs to the HMBS family. In terms of assembly, monomer. It depends on dipyrromethane as a cofactor.

It carries out the reaction 4 porphobilinogen + H2O = hydroxymethylbilane + 4 NH4(+). Its pathway is porphyrin-containing compound metabolism; protoporphyrin-IX biosynthesis; coproporphyrinogen-III from 5-aminolevulinate: step 2/4. Its function is as follows. Tetrapolymerization of the monopyrrole PBG into the hydroxymethylbilane pre-uroporphyrinogen in several discrete steps. This Shouchella clausii (strain KSM-K16) (Alkalihalobacillus clausii) protein is Porphobilinogen deaminase.